A 355-amino-acid polypeptide reads, in one-letter code: Biotin synthase (355 aa).

The 225-residue stretch at 51-275 (NTVKVNYLVN…VCPDKEIRIA (225 aa)) folds into the Radical SAM core domain. Positions 66, 70, and 73 each coordinate [4Fe-4S] cluster. [2Fe-2S] cluster is bound by residues Cys110, Cys143, Cys203, and Arg273.

Belongs to the radical SAM superfamily. Biotin synthase family. Homodimer. [4Fe-4S] cluster is required as a cofactor. Requires [2Fe-2S] cluster as cofactor.

The catalysed reaction is (4R,5S)-dethiobiotin + (sulfur carrier)-SH + 2 reduced [2Fe-2S]-[ferredoxin] + 2 S-adenosyl-L-methionine = (sulfur carrier)-H + biotin + 2 5'-deoxyadenosine + 2 L-methionine + 2 oxidized [2Fe-2S]-[ferredoxin]. It functions in the pathway cofactor biosynthesis; biotin biosynthesis; biotin from 7,8-diaminononanoate: step 2/2. Catalyzes the conversion of dethiobiotin (DTB) to biotin by the insertion of a sulfur atom into dethiobiotin via a radical-based mechanism. This Saccharopolyspora erythraea (strain ATCC 11635 / DSM 40517 / JCM 4748 / NBRC 13426 / NCIMB 8594 / NRRL 2338) protein is Biotin synthase.